A 473-amino-acid chain; its full sequence is O-methyltransferase ARMGADRAFT_1088206 (473 aa).

Residues 276–277 (AG), Asp299, 330–331 (DM), and Arg348 each bind S-adenosyl-L-methionine. The active-site Proton acceptor is the His352.

It belongs to the class I-like SAM-binding methyltransferase superfamily. Cation-independent O-methyltransferase family.

The protein operates within secondary metabolite biosynthesis. In terms of biological role, O-methyltransferase, part of the gene cluster that mediates the biosynthesis of melleolides, a range of antifungal and phytotoxic polyketide derivatives composed of an orsellinic acid (OA) moiety esterified to various sesquiterpene alcohols. The first step in melleolides biosynthesis is performed by the delta(6)-protoilludene synthase PRO1 which catalyzes the cyclization of farnesyl diphosphate to protoilludene. The orsellinic acid synthase armB produces OA by condensing acetyl-CoA with 3 malonyl-CoA units in a three-round chain elongation reaction folowed by a C2-C7 ring closure. ArmB further catalyzes the trans-esterification of OA to the various sesquiterpene alcohols resulting from the hydroxylation of protoilludene. The melleolides cluster also includes 5 cytochrome P450 monooxygenases, 4 NAD(+)-dependent oxidoreductases, one flavin-dependent oxidoreductase, and one O-methyltransferase. The cytochrome P450 monooxygenases may be involved in protoilludene hydroxylation to elaborate melleolides with multiple alcohol groups, such as melleolide D, which carries alcohol functionalities at C-4, C-5, C-10, and C-13. The role of the NAD(+)-dependent enzymes remains unknown. Numerous melleolides, including arnamial, show 5'-O-methylation of the aromatic moiety which may be catalyzed by the methyltransferase encoded in the cluster. The flavin-dependent oxidoreductase might represent the dehydrogenase yielding the aldehyde in position 1 of arnamial and other melleolides. Finally, several halogenase localized outside of the cluster, are able to catalyze the transfer of a single chlorine atom to the melleolide backbone, resulting in a 6'-chloromelleolide product. This chain is O-methyltransferase ARMGADRAFT_1088206, found in Armillaria gallica (Bulbous honey fungus).